A 211-amino-acid chain; its full sequence is Small ribosomal subunit protein uS5 (211 aa).

An S5 DRBM domain is found at 50 to 113; the sequence is LEDEVLDINM…DNAKINITRI (64 aa).

It belongs to the universal ribosomal protein uS5 family. As to quaternary structure, part of the 30S ribosomal subunit. Contacts protein S4.

In terms of biological role, with S4 and S12 plays an important role in translational accuracy. In Methanococcoides burtonii (strain DSM 6242 / NBRC 107633 / OCM 468 / ACE-M), this protein is Small ribosomal subunit protein uS5.